The following is a 196-amino-acid chain: ATP-dependent Clp protease proteolytic subunit (196 aa).

Ser98 serves as the catalytic Nucleophile. His123 is an active-site residue.

The protein belongs to the peptidase S14 family. As to quaternary structure, fourteen ClpP subunits assemble into 2 heptameric rings which stack back to back to give a disk-like structure with a central cavity, resembling the structure of eukaryotic proteasomes.

It localises to the cytoplasm. The catalysed reaction is Hydrolysis of proteins to small peptides in the presence of ATP and magnesium. alpha-casein is the usual test substrate. In the absence of ATP, only oligopeptides shorter than five residues are hydrolyzed (such as succinyl-Leu-Tyr-|-NHMec, and Leu-Tyr-Leu-|-Tyr-Trp, in which cleavage of the -Tyr-|-Leu- and -Tyr-|-Trp bonds also occurs).. Functionally, cleaves peptides in various proteins in a process that requires ATP hydrolysis. Has a chymotrypsin-like activity. Plays a major role in the degradation of misfolded proteins. This Geobacillus thermodenitrificans (strain NG80-2) protein is ATP-dependent Clp protease proteolytic subunit.